We begin with the raw amino-acid sequence, 191 residues long: Elongation factor P (191 aa).

It belongs to the elongation factor P family.

It localises to the cytoplasm. It functions in the pathway protein biosynthesis; polypeptide chain elongation. Involved in peptide bond synthesis. Stimulates efficient translation and peptide-bond synthesis on native or reconstituted 70S ribosomes in vitro. Probably functions indirectly by altering the affinity of the ribosome for aminoacyl-tRNA, thus increasing their reactivity as acceptors for peptidyl transferase. This Janthinobacterium sp. (strain Marseille) (Minibacterium massiliensis) protein is Elongation factor P.